The following is a 659-amino-acid chain: MFQNNPLLSQLKQQLHDSKPHVEGVVKGTDKAYGFLETEKETFFIAPPAMKKVMHGDKIKAAIETIGDKKQAEPEELIEPMLTRFIAKVRFNKDKKLQVLVDHPNINQPIGAAQAKTVKQELKEGDWVVATLKTHPLRDDRFFYAQIAEFICSAEDEFAPWWVTLARHEQSRYPVQGQEVYSMLDTETRRDLTALHFVTIDSENTQDMDDALYIEPVTAPNDEQTGWKLAVAIADPTAYIALDSQIEKDARKRCFTNYLPGFNIPMLPRELSDELCSLMENETRAALVCRLETDMQGEIVGEPEFILAQVQSKAKLAYNNVSDYLEQVENAWQPENESTQQQINWLHQFALVRINWRKKHGLLFKEKPDYSFVLADNGHVREIKAEYRRIANQIVEESMIIANICCAHYLAKNAQTGIFNTHVGFDKKFLPNAHNFLMANLSNEENQQELAERYSVENLATLAGYCRMRHDIEPIEGDYLEFRLRRFLTFAEFKSELAPHFGLGLTGYATWTSPIRKYSDMVNHRLIKACLANRECVKPSDETLARLQEARKQNRMVERDIADWLYCRYLADKVESNPEFRAEVQDCMRGGLRVQLLENGASVFVPASSIHPNKDEIQVNTDELALYINGERRYKIGDIVNIRLTEVKEETRSLIGNLV.

The RNB domain occupies 189–532 (RRDLTALHFV…NHRLIKACLA (344 aa)). The 83-residue stretch at 577 to 659 (NPEFRAEVQD…ETRSLIGNLV (83 aa)) folds into the S1 motif domain.

The protein belongs to the RNR ribonuclease family. RNase II subfamily.

Its subcellular location is the cytoplasm. The catalysed reaction is Exonucleolytic cleavage in the 3'- to 5'-direction to yield nucleoside 5'-phosphates.. In terms of biological role, involved in mRNA degradation. Hydrolyzes single-stranded polyribonucleotides processively in the 3' to 5' direction. This chain is Exoribonuclease 2, found in Mannheimia succiniciproducens (strain KCTC 0769BP / MBEL55E).